Consider the following 126-residue polypeptide: Holo-[acyl-carrier-protein] synthase (126 aa).

Mg(2+) is bound by residues aspartate 9 and glutamate 58.

It belongs to the P-Pant transferase superfamily. AcpS family. Mg(2+) serves as cofactor.

The protein localises to the cytoplasm. It carries out the reaction apo-[ACP] + CoA = holo-[ACP] + adenosine 3',5'-bisphosphate + H(+). In terms of biological role, transfers the 4'-phosphopantetheine moiety from coenzyme A to a Ser of acyl-carrier-protein. The polypeptide is Holo-[acyl-carrier-protein] synthase (Pectobacterium carotovorum subsp. carotovorum (strain PC1)).